A 231-amino-acid polypeptide reads, in one-letter code: NifU-like protein 1, chloroplastic (231 aa).

A chloroplast-targeting transit peptide spans 1-69 (MMASLATSIS…SSQGEKISPL (69 aa)).

The protein belongs to the NifU family. Homodimer; disulfide-linked. Predominantly expressed in floral stalks and siliques. Expressed in leaves, cauline leaves, flower stalks and flowers (at protein level).

It is found in the plastid. It localises to the chloroplast stroma. Its function is as follows. Molecular scaffold for [Fe-S] cluster assembly of chloroplastic iron-sulfur proteins. The protein is NifU-like protein 1, chloroplastic (NIFU1) of Arabidopsis thaliana (Mouse-ear cress).